A 983-amino-acid chain; its full sequence is Protein translocase subunit SecA (983 aa).

ATP-binding positions include glutamine 83, glycine 101–threonine 105, and aspartate 489. The interval isoleucine 948–glutamate 983 is disordered. The span at glutamate 973–glutamate 983 shows a compositional bias: polar residues.

Belongs to the SecA family. In terms of assembly, monomer and homodimer. Part of the essential Sec protein translocation apparatus which comprises SecA, SecYEG and auxiliary proteins SecDF. Other proteins may also be involved.

Its subcellular location is the cell membrane. The protein localises to the cytoplasm. It catalyses the reaction ATP + H2O + cellular proteinSide 1 = ADP + phosphate + cellular proteinSide 2.. Its function is as follows. Part of the Sec protein translocase complex. Interacts with the SecYEG preprotein conducting channel. Has a central role in coupling the hydrolysis of ATP to the transfer of proteins into and across the cell membrane, serving as an ATP-driven molecular motor driving the stepwise translocation of polypeptide chains across the membrane. The polypeptide is Protein translocase subunit SecA (Mesomycoplasma hyopneumoniae (strain 7448) (Mycoplasma hyopneumoniae)).